Reading from the N-terminus, the 61-residue chain is uncharacterized protein (61 aa).

Positions 24–60 (WMRYESERDEKLRMLERMRDELEAELEEIKREIERLR) form a coiled coil.

This is an uncharacterized protein from Archaeoglobus fulgidus (strain ATCC 49558 / DSM 4304 / JCM 9628 / NBRC 100126 / VC-16).